An 87-amino-acid polypeptide reads, in one-letter code: Small ribosomal subunit protein bS16 (87 aa).

Belongs to the bacterial ribosomal protein bS16 family.

This is Small ribosomal subunit protein bS16 from Nitrosospira multiformis (strain ATCC 25196 / NCIMB 11849 / C 71).